Consider the following 80-residue polypeptide: Serine palmitoyltransferase-regulating protein TSC3 (80 aa).

Residues 54-74 traverse the membrane as a helical segment; the sequence is FDSFFLHVFFLTIFSLSFFGI.

Interacts with the serine palmitoyltransferase complex LCB1-LCB2. Component of the SPOTS complex, at least composed of LCB1/2 (LCB1 and/or LCB2), ORM1/2 (ORM1 and/or ORM2), SAC1 and TSC3.

Its subcellular location is the endoplasmic reticulum membrane. Stimulates the activity of serine palmitoyltransferase (SPT), and thus plays a role in the biosynthesis of sphingolipids. In Saccharomyces cerevisiae (strain ATCC 204508 / S288c) (Baker's yeast), this protein is Serine palmitoyltransferase-regulating protein TSC3 (TSC3).